The primary structure comprises 445 residues: Methylenetetrahydrofolate--tRNA-(uracil-5-)-methyltransferase TrmFO (445 aa).

9–14 (GGGLAG) serves as a coordination point for FAD.

It belongs to the MnmG family. TrmFO subfamily. FAD serves as cofactor.

The protein localises to the cytoplasm. It catalyses the reaction uridine(54) in tRNA + (6R)-5,10-methylene-5,6,7,8-tetrahydrofolate + NADH + H(+) = 5-methyluridine(54) in tRNA + (6S)-5,6,7,8-tetrahydrofolate + NAD(+). The catalysed reaction is uridine(54) in tRNA + (6R)-5,10-methylene-5,6,7,8-tetrahydrofolate + NADPH + H(+) = 5-methyluridine(54) in tRNA + (6S)-5,6,7,8-tetrahydrofolate + NADP(+). In terms of biological role, catalyzes the folate-dependent formation of 5-methyl-uridine at position 54 (M-5-U54) in all tRNAs. The sequence is that of Methylenetetrahydrofolate--tRNA-(uracil-5-)-methyltransferase TrmFO from Rhizorhabdus wittichii (strain DSM 6014 / CCUG 31198 / JCM 15750 / NBRC 105917 / EY 4224 / RW1) (Sphingomonas wittichii).